Here is a 276-residue protein sequence, read N- to C-terminus: Rhomboid protease GlpG (276 aa).

Transmembrane regions (helical) follow at residues 94–114 (GPVTWIVMIACVLVYIAMSLI), 142–162 (IFMHFSLMHILFNLLWWWYLG), 169–189 (LGSGKLIVITVVSALLSGYVQ), 192–212 (FSGPWFGGLSGVVYALMGYVW), 229–249 (LIIFALLWIVAGWFDWFGMSM), and 250–270 (ANGAHIAGLIVGLAMAFVDTL). Ser-201 (nucleophile) is an active-site residue. His-254 is an active-site residue.

The protein belongs to the peptidase S54 family.

It is found in the cell inner membrane. The enzyme catalyses Cleaves type-1 transmembrane domains using a catalytic dyad composed of serine and histidine that are contributed by different transmembrane domains.. In terms of biological role, rhomboid-type serine protease that catalyzes intramembrane proteolysis. In Salmonella choleraesuis (strain SC-B67), this protein is Rhomboid protease GlpG.